Consider the following 406-residue polypeptide: Nicotinate phosphoribosyltransferase (406 aa).

At His225 the chain carries Phosphohistidine; by autocatalysis.

Belongs to the NAPRTase family. Transiently phosphorylated on a His residue during the reaction cycle. Phosphorylation strongly increases the affinity for substrates and increases the rate of nicotinate D-ribonucleotide production. Dephosphorylation regenerates the low-affinity form of the enzyme, leading to product release.

The catalysed reaction is nicotinate + 5-phospho-alpha-D-ribose 1-diphosphate + ATP + H2O = nicotinate beta-D-ribonucleotide + ADP + phosphate + diphosphate. It participates in cofactor biosynthesis; NAD(+) biosynthesis; nicotinate D-ribonucleotide from nicotinate: step 1/1. Catalyzes the synthesis of beta-nicotinate D-ribonucleotide from nicotinate and 5-phospho-D-ribose 1-phosphate at the expense of ATP. This is Nicotinate phosphoribosyltransferase from Psychromonas ingrahamii (strain DSM 17664 / CCUG 51855 / 37).